A 305-amino-acid chain; its full sequence is Lysosomal thioesterase PPT2 (305 aa).

The N-terminal stretch at Met1–Pro32 is a signal peptide. 2 disulfide bridges follow: Cys112-Cys120 and Cys168-Cys179. Ser114 (nucleophile) is an active-site residue. N-linked (GlcNAc...) asparagine glycosylation occurs at Asn193. Residues Asp231 and His286 contribute to the active site. Cys279 and Cys299 form a disulfide bridge.

It belongs to the palmitoyl-protein thioesterase family.

The protein localises to the lysosome. The enzyme catalyses hexadecanoyl-CoA + H2O = hexadecanoate + CoA + H(+). It catalyses the reaction S-hexadecanoyl-N-acetylcysteamine + H2O = N-acetylcysteamine + hexadecanoate + H(+). Its function is as follows. Catalyzes the cleavage of thioester bonds from S-palmitoyl-CoA or S-palmitoyl-N-acetylcysteamine (unbranched structures) but does not have activity against palmitoylcysteine or palmitoylated proteins, branched structures or bulky head groups. Conversely, hydrolyzes both long and short chain fatty acyl-CoA substrate. This Bos taurus (Bovine) protein is Lysosomal thioesterase PPT2 (PPT2).